Consider the following 346-residue polypeptide: S-adenosylmethionine:tRNA ribosyltransferase-isomerase (346 aa).

This sequence belongs to the QueA family. Monomer.

Its subcellular location is the cytoplasm. The catalysed reaction is 7-aminomethyl-7-carbaguanosine(34) in tRNA + S-adenosyl-L-methionine = epoxyqueuosine(34) in tRNA + adenine + L-methionine + 2 H(+). It functions in the pathway tRNA modification; tRNA-queuosine biosynthesis. In terms of biological role, transfers and isomerizes the ribose moiety from AdoMet to the 7-aminomethyl group of 7-deazaguanine (preQ1-tRNA) to give epoxyqueuosine (oQ-tRNA). This chain is S-adenosylmethionine:tRNA ribosyltransferase-isomerase, found in Nitrosomonas eutropha (strain DSM 101675 / C91 / Nm57).